Here is a 390-residue protein sequence, read N- to C-terminus: Small ribosomal subunit protein uS9m (390 aa).

The segment at 368–390 (PRIRERKKPGQEGARRKFTWKKR) is disordered.

Belongs to the universal ribosomal protein uS9 family. As to quaternary structure, component of the mitochondrial ribosome small subunit (28S) which comprises a 12S rRNA and about 30 distinct proteins.

It is found in the mitochondrion. The protein is Small ribosomal subunit protein uS9m (Mrps9) of Mus musculus (Mouse).